The chain runs to 223 residues: Regulator of G-protein signaling 19 (223 aa).

Positions 1 to 30 (MPTPPEAEKQQTGPEEADQPPSMSSHDAAP) are disordered. Positions 20 to 29 (PPSMSSHDAA) are enriched in low complexity. Phosphoserine is present on residues S24 and S103. In terms of domain architecture, RGS spans 96–212 (SFDKLMHSPA…LSSPAYRALL (117 aa)). S157 carries the post-translational modification Phosphoserine; by MAPK1 and MAPK3. The interaction with GIPC stretch occupies residues 213-223 (LQGASQSSSEA).

As to quaternary structure, interacts with GIPC PDZ domain. Interacts with GNAO1. Post-translationally, fatty acylated. Heavily palmitoylated in the cysteine string motif. In terms of processing, phosphorylated, mainly on serine residues.

The protein resides in the membrane. Its function is as follows. Inhibits signal transduction by increasing the GTPase activity of G protein alpha subunits thereby driving them into their inactive GDP-bound form. Binds to G-alpha subfamily 1 members, with the order G(i)a3 &gt; G(i)a1 &gt; G(o)a &gt;&gt; G(z)a/G(i)a2. Activity on G(z)-alpha is inhibited by phosphorylation and palmitoylation of the G-protein. The polypeptide is Regulator of G-protein signaling 19 (RGS19) (Bos taurus (Bovine)).